The following is a 426-amino-acid chain: 10-deoxymethynolide desosaminyltransferase (426 aa).

Belongs to the glycosyltransferase 28 family. In terms of assembly, forms a complex with DesVIII.

It carries out the reaction 10-deoxymethynolide + dTDP-alpha-D-desosamine = 10-deoxymethymycin + dTDP + H(+). Its pathway is antibiotic biosynthesis. Its function is as follows. Involved in the biosynthesis of the macrolide antibiotics methymycin, neomethymycin, narbomycin, and pikromycin. Catalyzes the attachment of dTDP-D-desosamine onto 12- and 14-membered macrolactone rings 10-deoxymethynolide and narbonolide to produce 10-deoxymethymycin (YC-17) and narbomycin. DesVII is unique among glycosyltransferases in that it requires an additional protein component, DesVIII, for its activity. DesVII can recognize and process not only cyclic substrates of different ring size, but also a variety of linear substrates albeit with reduced, but measurable activities. Both L-sugars and D-sugars are recognized as substrates and variant substitutions at C-3 and C-4 are tolerated, but deoxygenation at C-6 is required. In Streptomyces venezuelae, this protein is 10-deoxymethynolide desosaminyltransferase.